The following is a 259-amino-acid chain: Phosphatidylglycerol--prolipoprotein diacylglyceryl transferase (259 aa).

The next 4 helical transmembrane spans lie at 9–29 (IIFYLGPLAISWYSLSYVVGI), 55–75 (FITYAVIGIIVGGRLGFVLLY), 92–112 (EGGMSFHGGALGVIIAAYLFC), and 117–137 (VNFLSLTDIIAAVVPIGLFLG). Arginine 138 contributes to the a 1,2-diacyl-sn-glycero-3-phospho-(1'-sn-glycerol) binding site. 3 helical membrane passes run 172-192 (QLYEAFFEGLVLFCILAYATF), 201-221 (GLNSGLFLTFYALFRIAIEIF), and 228-248 (IGFILDNLTMGQILSVPMLIL).

It belongs to the Lgt family.

The protein localises to the cell inner membrane. It catalyses the reaction L-cysteinyl-[prolipoprotein] + a 1,2-diacyl-sn-glycero-3-phospho-(1'-sn-glycerol) = an S-1,2-diacyl-sn-glyceryl-L-cysteinyl-[prolipoprotein] + sn-glycerol 1-phosphate + H(+). It participates in protein modification; lipoprotein biosynthesis (diacylglyceryl transfer). In terms of biological role, catalyzes the transfer of the diacylglyceryl group from phosphatidylglycerol to the sulfhydryl group of the N-terminal cysteine of a prolipoprotein, the first step in the formation of mature lipoproteins. This Rickettsia akari (strain Hartford) protein is Phosphatidylglycerol--prolipoprotein diacylglyceryl transferase.